Consider the following 283-residue polypeptide: Zinc import ATP-binding protein ZnuC (283 aa).

The ABC transporter domain occupies 13-228 (VEMRNAGVHR…PEYVRLFGAR (216 aa)). ATP is bound at residue 45 to 52 (GPNGSGKS). The interval 264–283 (HHHDHARDGGQGGGGHGHAG) is disordered. Positions 272–283 (GGQGGGGHGHAG) are enriched in gly residues.

Belongs to the ABC transporter superfamily. Zinc importer (TC 3.A.1.15.5) family. In terms of assembly, the complex is composed of two ATP-binding proteins (ZnuC), two transmembrane proteins (ZnuB) and a solute-binding protein (ZnuA).

The protein localises to the cell inner membrane. The catalysed reaction is Zn(2+)(out) + ATP(in) + H2O(in) = Zn(2+)(in) + ADP(in) + phosphate(in) + H(+)(in). Functionally, part of the ABC transporter complex ZnuABC involved in zinc import. Responsible for energy coupling to the transport system. In Chelativorans sp. (strain BNC1), this protein is Zinc import ATP-binding protein ZnuC.